A 279-amino-acid polypeptide reads, in one-letter code: Beta-lactamase (279 aa).

Positions 1-21 (MRYVRLCVISLLATLPLVVYA) are cleaved as a signal peptide. Serine 66 (acyl-ester intermediate) is an active-site residue. A disulfide bond links cysteine 73 and cysteine 119. 230–232 (KTG) contacts substrate.

Belongs to the class-A beta-lactamase family.

It catalyses the reaction a beta-lactam + H2O = a substituted beta-amino acid. In Klebsiella pneumoniae, this protein is Beta-lactamase.